We begin with the raw amino-acid sequence, 575 residues long: MAASIGPKSIPETITRQTKGGRKLKYTLTVIQQPERARACGSGAKSSADRRPVDPPPVVQLRIYDETDPRQEKEITFHYNANFFLFATLEVARNIAQGRVQTSAPQAPVLTGMPVSGMAYLDRPNEAGYFIFPDLSVRHEGQYKLSFNLYEETKEEKDTDIEPSNDSSMRQMSSAAAAAESSFDWRMELKSDQFTVYSAKKFPGLSESTDLSRTVAEQGCRVRIRRDVRMRRRDTKPGGDFGEKEDEYQQGRATSPPFDYNIQAARQRALSASVHEDPQQRRGSGEISPYHSPVVNTPFRTPSISPSTPNAPLPPGNQLGWIPNGPGYAAAPSIQPPHPPPPPPSSYPQSMPATHHNQGPSTQFRQQPPQGPPPAPIGYDERRSSYSQFRPPTNPSQQQSYESDYRRMSFGYQIPASSQGPQPIAPAVQNPAYNQQSMEPTYSRNPPAYSTSFQDSVALAPLRAAEQPLAMSPLASVTSISRGTQNSAPMPSHNYNKLERSGSYSQYAPIEAEAPKSTNKRSFNDVFSTPTESLSNGRRPSAIGIDIEENTRKQEQMIYRRANGNIQNKPAPGLN.

Residues 21–225 (GRKLKYTLTV…AEQGCRVRIR (205 aa)) form the Velvet domain. Positions 35-40 (ERARAC) match the Nuclear localization signal motif. Disordered stretches follow at residues 36-56 (RARACGSGAKSSADRRPVDPP) and 227-402 (DVRM…QSYE). Positions 274–284 (VHEDPQQRRGS) are enriched in basic and acidic residues. The segment covering 294-308 (VVNTPFRTPSISPST) has biased composition (polar residues). Over residues 334-346 (IQPPHPPPPPPSS) the composition is skewed to pro residues. Polar residues-rich tracts occupy residues 355–365 (HHNQGPSTQFR) and 385–402 (SYSQFRPPTNPSQQQSYE). Residues 465–509 (AEQPLAMSPLASVTSISRGTQNSAPMPSHNYNKLERSGSYSQYAP) are PEST. The tract at residues 513–549 (EAPKSTNKRSFNDVFSTPTESLSNGRRPSAIGIDIEE) is disordered. Residues 516 to 538 (KSTNKRSFNDVFSTPTESLSNGR) are compositionally biased toward polar residues.

The protein belongs to the velvet family. VeA subfamily. In terms of assembly, component of the heterotrimeric velvet complex composed of LAE1, VEL1 and VEL2; VEL1 acting as a bridging protein between LAE1 and VEL2.

It localises to the nucleus. The protein resides in the cytoplasm. Component of the velvet transcription factor complex that controls sexual/asexual developmental ratio in response to light, promoting sexual development in the darkness while stimulating asexual sporulation under illumination. The velvet complex hat acts as a global regulator for secondary metabolite gene expression. Controls the expression of the oxalic acid and melanin gene clusters. Also controls the expression of proteases and carbohydrate-active enzymes. Involved in the resistance to oxidative stress. Required for full virulence. The polypeptide is Developmental and secondary metabolism regulator VEL1 (Botryotinia fuckeliana (strain B05.10) (Noble rot fungus)).